Here is a 251-residue protein sequence, read N- to C-terminus: Triosephosphate isomerase (251 aa).

Substrate is bound by residues Asn10 and Lys12. Residue His95 is the Electrophile of the active site. Catalysis depends on Glu167, which acts as the Proton acceptor.

The protein belongs to the triosephosphate isomerase family. Homodimer.

The catalysed reaction is D-glyceraldehyde 3-phosphate = dihydroxyacetone phosphate. It participates in carbohydrate biosynthesis; gluconeogenesis. The protein operates within carbohydrate degradation; glycolysis; D-glyceraldehyde 3-phosphate from glycerone phosphate: step 1/1. This Coprinopsis cinerea (strain Okayama-7 / 130 / ATCC MYA-4618 / FGSC 9003) (Inky cap fungus) protein is Triosephosphate isomerase (TPI).